A 441-amino-acid chain; its full sequence is Histone-lysine N-methyltransferase set9 (441 aa).

The SET domain maps to cysteine 108–serine 221.

The protein belongs to the class V-like SAM-binding methyltransferase superfamily. Histone-lysine methyltransferase family. Suvar4-20 subfamily.

The protein localises to the nucleus. It is found in the chromosome. It carries out the reaction L-lysyl(20)-[histone H4] + 3 S-adenosyl-L-methionine = N(6),N(6),N(6)-trimethyl-L-lysyl(20)-[histone H4] + 3 S-adenosyl-L-homocysteine + 3 H(+). Its function is as follows. Histone methyltransferase that specifically trimethylates 'Lys-20' of histone H4 to form H4K20me3. H4 'Lys-20' methylation is apparently not involved in the regulation of gene expression or heterochromatin function but participates in DNA damage response by giving a 'histone mark' required for the recruitment of the checkpoint protein Crb2 to sites of DNA damage. This is Histone-lysine N-methyltransferase set9 (set9) from Schizosaccharomyces pombe (strain 972 / ATCC 24843) (Fission yeast).